Reading from the N-terminus, the 692-residue chain is MKKNSQIRAKIIELREKIEKWNHHYYQLQNPLVDDLVYDKTLRELEKLERENFFLFSLEELNQSPSQKVGSKITSKFEKVAHSSPMLSLNKAYSNEELEKWAKKAREILKTVTFFVEPKIDGIALSLFYQNGNLIKALTRGDGVFGENVLVNALKINDEFIPKKINYLEDLEVRGEIYIDNSTFASLQLETKKFKNPRNAASGILRRYKNHKPKIDAKSIKFLEEESDFRYLKSFFYTLVNPEKHKINSQFDSINFLRNLGFQVNPFQKKCSDLKDVFNFISIIKQKRDFLNYNIDGVVVKVNEFSIYEKLGSTSKFPHSAIAFKFEDDIAKTKLLAIFATIGRTGKVTYNAKIEPVTLAGSKISSAILPNYSYIENLKLNLNTEVYIKKAGEIIPQIIGSVHNYPKTNFSIVKNCPKCNSELVNSESGLDQFCQNQFCPEIILQKIVHFCSKNALNIESLAQKRIEKFLEKGLISSACDIFYLKDKLELIYERLSNKNQLLTKQNASQSMQIKSIMKLLNEVERAKNIDFYRLIFGLGIRNVGLKAAKILSRYASNLSELRNLDFNLLKNQHDFGPVIIESLIDYFNNQKNSEQLNCLETVGFNFKTTFLTNQSNSWASFAISGKLSKPRDEYVRIIEESGASFHESVTKKTDFLLLGQSAGSKIEKAKKAGIKIINEVQFFDLIKNSKKT.

NAD(+) contacts are provided by residues 35 to 39 (DLVYD), 88 to 89 (SL), and Glu-117. Lys-119 serves as the catalytic N6-AMP-lysine intermediate. 4 residues coordinate NAD(+): Arg-140, Glu-176, Lys-301, and Lys-325. Positions 416, 419, 434, and 439 each coordinate Zn(2+). One can recognise a BRCT domain in the interval 611 to 692 (LTNQSNSWAS…FDLIKNSKKT (82 aa)).

Belongs to the NAD-dependent DNA ligase family. LigA subfamily. Requires Mg(2+) as cofactor. The cofactor is Mn(2+).

It carries out the reaction NAD(+) + (deoxyribonucleotide)n-3'-hydroxyl + 5'-phospho-(deoxyribonucleotide)m = (deoxyribonucleotide)n+m + AMP + beta-nicotinamide D-nucleotide.. In terms of biological role, DNA ligase that catalyzes the formation of phosphodiester linkages between 5'-phosphoryl and 3'-hydroxyl groups in double-stranded DNA using NAD as a coenzyme and as the energy source for the reaction. It is essential for DNA replication and repair of damaged DNA. This Mesomycoplasma hyopneumoniae (strain 7448) (Mycoplasma hyopneumoniae) protein is DNA ligase.